The sequence spans 57 residues: MNFLQNFCRSKFIVFERVTPFTHKIIHKHSHHQTSSFNPMPSEVSLHTSHNFPHTTF.

Residues 31 to 57 form a disordered region; it reads HHQTSSFNPMPSEVSLHTSHNFPHTTF. Residues 33-57 are compositionally biased toward polar residues; it reads QTSSFNPMPSEVSLHTSHNFPHTTF.

This is an uncharacterized protein from Invertebrate iridescent virus 6 (IIV-6).